The following is a 118-amino-acid chain: Nucleoid-associated protein TM_0687 (118 aa).

It belongs to the YbaB/EbfC family. As to quaternary structure, homodimer.

Its subcellular location is the cytoplasm. It is found in the nucleoid. Its function is as follows. Binds to DNA and alters its conformation. May be involved in regulation of gene expression, nucleoid organization and DNA protection. This is Nucleoid-associated protein TM_0687 from Thermotoga maritima (strain ATCC 43589 / DSM 3109 / JCM 10099 / NBRC 100826 / MSB8).